Here is a 169-residue protein sequence, read N- to C-terminus: Peptide methionine sulfoxide reductase MsrA (169 aa).

The active site involves cysteine 10.

Belongs to the MsrA Met sulfoxide reductase family.

The catalysed reaction is L-methionyl-[protein] + [thioredoxin]-disulfide + H2O = L-methionyl-(S)-S-oxide-[protein] + [thioredoxin]-dithiol. It catalyses the reaction [thioredoxin]-disulfide + L-methionine + H2O = L-methionine (S)-S-oxide + [thioredoxin]-dithiol. Functionally, has an important function as a repair enzyme for proteins that have been inactivated by oxidation. Catalyzes the reversible oxidation-reduction of methionine sulfoxide in proteins to methionine. The polypeptide is Peptide methionine sulfoxide reductase MsrA (Streptococcus mutans serotype c (strain ATCC 700610 / UA159)).